A 107-amino-acid polypeptide reads, in one-letter code: Snaclec VP12 subunit A (107 aa).

2 disulfides stabilise this stretch: C4–C15 and C32–C107. Residues 11-107 (YEGNCYKAFD…ECGLAYPFIC (97 aa)) enclose the C-type lectin domain.

The protein belongs to the snaclec family. Heterodimer of subunits alpha and beta; disulfide-linked. In terms of tissue distribution, expressed by the venom gland.

It is found in the secreted. Its function is as follows. Inhibits integrin alpha-2/beta-1- (ITGA2/ITGB1) dependent melanoma metastasis. In Daboia palaestinae (Palestine viper), this protein is Snaclec VP12 subunit A.